We begin with the raw amino-acid sequence, 286 residues long: Penicillin-insensitive murein endopeptidase (286 aa).

An N-terminal signal peptide occupies residues 1–22; the sequence is MNKILLKTTIIFTALFSLNVVA. Zn(2+) is bound by residues His117, His120, Asp127, Asp152, and His218.

The protein belongs to the peptidase M74 family. Zn(2+) serves as cofactor.

The protein localises to the periplasm. Functionally, murein endopeptidase that cleaves the D-alanyl-meso-2,6-diamino-pimelyl amide bond that connects peptidoglycan strands. Likely plays a role in the removal of murein from the sacculus. The protein is Penicillin-insensitive murein endopeptidase (mepA) of Haemophilus influenzae (strain ATCC 51907 / DSM 11121 / KW20 / Rd).